Reading from the N-terminus, the 298-residue chain is 4-hydroxy-tetrahydrodipicolinate synthase (298 aa).

Thr-51 is a binding site for pyruvate. The active-site Proton donor/acceptor is the Tyr-139. Lys-167 serves as the catalytic Schiff-base intermediate with substrate. Ile-209 contributes to the pyruvate binding site.

Belongs to the DapA family. In terms of assembly, homotetramer; dimer of dimers.

The protein localises to the cytoplasm. The enzyme catalyses L-aspartate 4-semialdehyde + pyruvate = (2S,4S)-4-hydroxy-2,3,4,5-tetrahydrodipicolinate + H2O + H(+). Its pathway is amino-acid biosynthesis; L-lysine biosynthesis via DAP pathway; (S)-tetrahydrodipicolinate from L-aspartate: step 3/4. Catalyzes the condensation of (S)-aspartate-beta-semialdehyde [(S)-ASA] and pyruvate to 4-hydroxy-tetrahydrodipicolinate (HTPA). The protein is 4-hydroxy-tetrahydrodipicolinate synthase of Histophilus somni (strain 2336) (Haemophilus somnus).